The sequence spans 888 residues: 3-hydroxy-3-methylglutaryl-coenzyme A reductase (888 aa).

Residues 1-9 (MLSRLFRMH) are Cytoplasmic-facing. A helical membrane pass occupies residues 10 to 39 (GLFVASHPWEVIVGTVTLTICMMSMNMFTG). The Lumenal segment spans residues 40–56 (NNKICGWNYECPKLEED). Residues 57-78 (VLSSDIIILTITRCIAILYIYF) form a helical membrane-spanning segment. In terms of domain architecture, SSD spans 61-218 (DIIILTITRC…MTFFPACVSL (158 aa)). Residues 75-78 (YIYF) carry the INSIG-binding motif motif. The Cytoplasmic portion of the chain corresponds to 79–89 (QFQNLRQLGSK). Lys-89 is covalently cross-linked (Glycyl lysine isopeptide (Lys-Gly) (interchain with G-Cter in ubiquitin)). Residues 90–114 (YILGIAGLFTIFSSFVFSTVVIHFL) traverse the membrane as a helical segment. At 115–123 (DKELTGLNE) the chain is on the lumenal side. A helical transmembrane segment spans residues 124 to 149 (ALPFFLLLVDLSRASALAKFALSSNS). At 150 to 159 (QDEVRENIAR) the chain is on the cytoplasmic side. Residues 160–187 (GMAILGPTFTLDALVECLVIGVGTMSGV) form a helical membrane-spanning segment. Residues 188-191 (RQLE) are Lumenal-facing. Residues 192-220 (IMCCFGCMSVLANYFVFMTFFPACVSLVL) traverse the membrane as a helical segment. At 221-248 (ELSRESREGRPIWQLSHFARVLEEEENK) the chain is on the cytoplasmic side. Residue Lys-248 forms a Glycyl lysine isopeptide (Lys-Gly) (interchain with G-Cter in ubiquitin) linkage. Residues 249–275 (PNPVTQRVKMIMSLGLVLVHAHSRWIA) traverse the membrane as a helical segment. Residues 276–314 (DPSPQNSTADNSKVSLGLDENVSKRIEPSVSLWQFYLSK) lie on the Lumenal side of the membrane. Residues Asn-281 and Asn-296 are each glycosylated (N-linked (GlcNAc...) asparagine). A helical transmembrane segment spans residues 315 to 339 (MISMDIEQVITLSLALLLAVKYIFF). Residues 340 to 888 (EQAETESTLS…LQGTCTKKAA (549 aa)) are Cytoplasmic-facing. Active-site charge relay system residues include Glu-559, Lys-691, and Asp-767. His-866 functions as the Proton donor in the catalytic mechanism. Ser-872 bears the Phosphoserine; by AMPK mark.

It belongs to the HMG-CoA reductase family. In terms of assembly, homotetramer. Homodimer. Interacts (via its SSD) with INSIG1; the interaction, accelerated by sterols, leads to the recruitment of HMGCR to AMFR/gp78 for its ubiquitination by the sterol-mediated ERAD pathway. Interacts with UBIAD1. In terms of processing, undergoes sterol-mediated ubiquitination and ER-associated degradation (ERAD). Accumulation of sterols in the endoplasmic reticulum (ER) membrane, triggers binding of the reductase to the ER membrane protein INSIG1 or INSIG2. The INSIG1 binding leads to the recruitment of the ubiquitin ligase, AMFR/gp78, RNF139 or RNF145, initiating ubiquitination of the reductase. The ubiquitinated reductase is then extracted from the ER membrane and delivered to cytosolic 26S proteosomes by a mechanism probably mediated by the ATPase Valosin-containing protein VCP/p97. The INSIG2-binding leads to the recruitment of the ubiquitin ligase RNF139, initiating ubiquitination of the reductase. Lys-248 is the main site of ubiquitination. Ubiquitination is enhanced by the presence of a geranylgeranylated protein. N-glycosylated. Deglycosylated by NGLY1 on release from the endoplasmic reticulum (ER) in a sterol-mediated manner. Post-translationally, phosphorylated. Phosphorylation at Ser-872 reduces the catalytic activity.

It localises to the endoplasmic reticulum membrane. The protein localises to the peroxisome membrane. It catalyses the reaction (R)-mevalonate + 2 NADP(+) + CoA = (3S)-3-hydroxy-3-methylglutaryl-CoA + 2 NADPH + 2 H(+). It functions in the pathway metabolic intermediate biosynthesis; (R)-mevalonate biosynthesis; (R)-mevalonate from acetyl-CoA: step 3/3. Its activity is regulated as follows. Regulated by a negative feedback mechanism through sterols and non-sterol metabolites derived from mevalonate. Phosphorylation at Ser-872 down-regulates the catalytic activity. Catalyzes the conversion of (3S)-hydroxy-3-methylglutaryl-CoA (HMG-CoA) to mevalonic acid, the rate-limiting step in the synthesis of cholesterol and other isoprenoids, thus plays a critical role in cellular cholesterol homeostasis. The chain is 3-hydroxy-3-methylglutaryl-coenzyme A reductase (HMGCR) from Bos taurus (Bovine).